Reading from the N-terminus, the 416-residue chain is Succinate--CoA ligase [ADP-forming] subunit beta (416 aa).

The transit peptide at 1–14 directs the protein to the hydrogenosome; it reads MLRMAPKTVGAVRN. ATP is bound by residues Lys-64, 71–73, and Glu-132; that span reads GRG. Mg(2+) contacts are provided by Asn-224 and Asp-242. Substrate is bound by residues Asn-293 and 350-352; that span reads GIM.

It belongs to the succinate/malate CoA ligase beta subunit family. As to quaternary structure, heterodimer of an alpha and a beta subunit. Mg(2+) is required as a cofactor.

The protein localises to the hydrogenosome. It carries out the reaction succinate + ATP + CoA = succinyl-CoA + ADP + phosphate. Its pathway is carbohydrate metabolism; tricarboxylic acid cycle; succinate from succinyl-CoA (ligase route): step 1/1. Succinyl-CoA synthetase functions in the citric acid cycle (TCA), coupling the hydrolysis of succinyl-CoA to the synthesis of ATP and thus represents the only step of substrate-level phosphorylation in the TCA. The beta subunit provides nucleotide specificity of the enzyme and binds the substrate succinate, while the binding sites for coenzyme A and phosphate are found in the alpha subunit. This Blastocystis sp. subtype 1 (strain ATCC 50177 / NandII) protein is Succinate--CoA ligase [ADP-forming] subunit beta (SCSb).